Here is a 326-residue protein sequence, read N- to C-terminus: tRNA uridine(34) hydroxylase (326 aa).

The Rhodanese domain maps to 123–217 (SDPDVLLVDT…YLEEVPEENS (95 aa)). The active-site Cysteine persulfide intermediate is the Cys-177. Over residues 276–320 (EEQKSRFREREKQVQLANERGETHVGGDAAKLIEQRKQEKKEKKQ) the composition is skewed to basic and acidic residues. The disordered stretch occupies residues 276–326 (EEQKSRFREREKQVQLANERGETHVGGDAAKLIEQRKQEKKEKKQQQRSSK).

This sequence belongs to the TrhO family.

The enzyme catalyses uridine(34) in tRNA + AH2 + O2 = 5-hydroxyuridine(34) in tRNA + A + H2O. Its function is as follows. Catalyzes oxygen-dependent 5-hydroxyuridine (ho5U) modification at position 34 in tRNAs. The sequence is that of tRNA uridine(34) hydroxylase from Aliivibrio salmonicida (strain LFI1238) (Vibrio salmonicida (strain LFI1238)).